The following is a 410-amino-acid chain: MAREKFERTKPHVNIGTIGHVDHGKTTLTAAITMVMACNTAGSKGKKYEDIDSAPEEKARGITINTAHVEYETATRHYAHVDCPGHADYVKNMITGAAQMDGAILVVSGADGPMPQTKEHILLAKQVGVPNIVVFLNKQDQVDDEELLELVELEVRETLSNYEFPGDEVPVVPGSALLALEAMTENPSLKRGENEWVDKIFALMDAVDQYIPTPKRDTDKSFLMAVEDVFSITGRGTVATGRVERGSVKLGDTIEIVGLKPTRETTVTGLEMFQKTLDQSVAGDNVGILLRGIQKEDIQRGMVLAAPRTITPHTKFESQVYVLTKEEGGRHTPFFPGYRPQFYVRTTDVTGKIDSFRADDGGEATMVMPGDRVKMVVELIQPIAIEKGMRFAIREGGRTVGAGVVSNIIA.

A tr-type G domain is found at 10–215 (KPHVNIGTIG…AVDQYIPTPK (206 aa)). A G1 region spans residues 19–26 (GHVDHGKT). 19–26 (GHVDHGKT) lines the GTP pocket. Threonine 26 provides a ligand contact to Mg(2+). Positions 61–65 (GITIN) are G2. Residues 82 to 85 (DCPG) form a G3 region. GTP contacts are provided by residues 82-86 (DCPGH) and 137-140 (NKQD). The segment at 137–140 (NKQD) is G4. The segment at 175–177 (SAL) is G5.

Belongs to the TRAFAC class translation factor GTPase superfamily. Classic translation factor GTPase family. EF-Tu/EF-1A subfamily.

It localises to the plastid. The protein localises to the chloroplast. It catalyses the reaction GTP + H2O = GDP + phosphate + H(+). Its function is as follows. GTP hydrolase that promotes the GTP-dependent binding of aminoacyl-tRNA to the A-site of ribosomes during protein biosynthesis. This Nephroselmis olivacea (Green alga) protein is Elongation factor Tu, chloroplastic (tufA).